The chain runs to 36 residues: Kappa-theraphotoxin-Aa1a (36 aa).

Cystine bridges form between Cys-3/Cys-18, Cys-10/Cys-23, and Cys-17/Cys-30. Ile-36 carries the post-translational modification Isoleucine amide.

This sequence belongs to the neurotoxin 10 (Hwtx-1) family. In terms of tissue distribution, expressed by the venom gland.

The protein resides in the secreted. Its function is as follows. Selective inhibitor of voltage-gated potassium channel Kv10.1/KCNH1/EAG1 (IC(50)=637 nM). It acts by shifting the voltage dependence of channel activation in a depolarising direction. It shows a 100% inhibition at saturating concentrations, shows fast on-rates and is reversible. It also slightly affects channel inactivation, when the membrane is highly depolarised (&gt;+80 mV). This Avicularia aurantiaca (Yellow-banded pinktoe tarantula) protein is Kappa-theraphotoxin-Aa1a.